We begin with the raw amino-acid sequence, 295 residues long: Bifunctional protein FolD (295 aa).

Residues 164-166 (GRS), Ser193, and Ile234 contribute to the NADP(+) site.

This sequence belongs to the tetrahydrofolate dehydrogenase/cyclohydrolase family. As to quaternary structure, homodimer.

It carries out the reaction (6R)-5,10-methylene-5,6,7,8-tetrahydrofolate + NADP(+) = (6R)-5,10-methenyltetrahydrofolate + NADPH. It catalyses the reaction (6R)-5,10-methenyltetrahydrofolate + H2O = (6R)-10-formyltetrahydrofolate + H(+). Its pathway is one-carbon metabolism; tetrahydrofolate interconversion. Catalyzes the oxidation of 5,10-methylenetetrahydrofolate to 5,10-methenyltetrahydrofolate and then the hydrolysis of 5,10-methenyltetrahydrofolate to 10-formyltetrahydrofolate. The chain is Bifunctional protein FolD from Flavobacterium johnsoniae (strain ATCC 17061 / DSM 2064 / JCM 8514 / BCRC 14874 / CCUG 350202 / NBRC 14942 / NCIMB 11054 / UW101) (Cytophaga johnsonae).